Here is a 437-residue protein sequence, read N- to C-terminus: Chromosomal replication initiator protein DnaA (437 aa).

The domain I, interacts with DnaA modulators stretch occupies residues 1 to 69 (MLGDTTLKQL…AHLFELSTGI (69 aa)). Residues 69 to 100 (IRPKIEIRLGSLKKDVKSSSPKAGVSKGQKST) are domain II. The domain III, AAA+ region stretch occupies residues 101 to 315 (ILNPSFTFDS…GIIIKLNAYA (215 aa)). Residues Gly-145, Gly-147, Lys-148, and Thr-149 each coordinate ATP. Residues 316-437 (NLMNQEITLQ…ELKNKIKSRN (122 aa)) are domain IV, binds dsDNA.

This sequence belongs to the DnaA family. As to quaternary structure, oligomerizes as a right-handed, spiral filament on DNA at oriC.

It localises to the cytoplasm. Its function is as follows. Plays an essential role in the initiation and regulation of chromosomal replication. ATP-DnaA binds to the origin of replication (oriC) to initiate formation of the DNA replication initiation complex once per cell cycle. Binds the DnaA box (a 9 base pair repeat at the origin) and separates the double-stranded (ds)DNA. Forms a right-handed helical filament on oriC DNA; dsDNA binds to the exterior of the filament while single-stranded (ss)DNA is stabiized in the filament's interior. The ATP-DnaA-oriC complex binds and stabilizes one strand of the AT-rich DNA unwinding element (DUE), permitting loading of DNA polymerase. After initiation quickly degrades to an ADP-DnaA complex that is not apt for DNA replication. Binds acidic phospholipids. The protein is Chromosomal replication initiator protein DnaA of Wolinella succinogenes (strain ATCC 29543 / DSM 1740 / CCUG 13145 / JCM 31913 / LMG 7466 / NCTC 11488 / FDC 602W) (Vibrio succinogenes).